Consider the following 202-residue polypeptide: Small ribosomal subunit protein uS4c (202 aa).

Positions 90 to 153 (MRLDNVIFRL…KSETIISKNI (64 aa)) constitute an S4 RNA-binding domain.

This sequence belongs to the universal ribosomal protein uS4 family. In terms of assembly, part of the 30S ribosomal subunit. Contacts protein S5. The interaction surface between S4 and S5 is involved in control of translational fidelity.

The protein localises to the plastid. The protein resides in the chloroplast. In terms of biological role, one of the primary rRNA binding proteins, it binds directly to 16S rRNA where it nucleates assembly of the body of the 30S subunit. With S5 and S12 plays an important role in translational accuracy. This chain is Small ribosomal subunit protein uS4c (rps4), found in Arbusculohypopterygium arbuscula (Moss).